Here is a 218-residue protein sequence, read N- to C-terminus: MSQTAMSETYDFLFKFLVIGNAGTGKSCLLHQFIEKKFKDDSNHTIGVEFGSKIINVGGKYVKLQIWDTAGQERFRSVTRSYYRGAAGALLVYDITSRETYNALTNWLTDARMLASQNIVIILCGNKKDLDADREVTFLEASRFAQENELMFLETSALTGENVEEAFVQCARKILNKIESGELDPERMGSGIQYGDAALRQLRSPRRAQAPNAQECGC.

G23, T24, G25, K26, S27, and C28 together coordinate GDP. Residues G23, T24, G25, K26, S27, C28, S42, H44, and T45 each contribute to the GTP site. A Mg(2+)-binding site is contributed by S27. The Switch 1 motif lies at 44-49 (HTIGVE). Positions 45 and 68 each coordinate Mg(2+). The short motif at 70 to 79 (AGQERFRSVT) is the Switch 2 element. Residue G71 participates in GTP binding. Residue Q72 is modified to 5-glutamyl serotonin. Residues N126, K127, D129, A157, and L158 each contribute to the GDP site. Residues N126, K127, D129, A157, and L158 each contribute to the GTP site. S190 carries the phosphoserine modification. S204 carries the phosphoserine; by CDK1 modification. Residues C216 and C218 are each lipidated (S-geranylgeranyl cysteine). At C218 the chain carries Cysteine methyl ester.

The protein belongs to the small GTPase superfamily. Rab family. As to quaternary structure, interacts with SGSM1, SGSM2 and SGSM3. Interacts with RAB11FIP1, RABEP1, ZFYVE20 and RUFY1. Interacts (membrane-bound form) with NDRG1; the interaction involves NDRG1 in vesicular recycling of E-cadherin. Interacts (in GTP-bound form) with GRIPAP1 (via N-terminus). Interacts with RABEP1 and RBSN. Does not interact with HPS4. Interacts with RABEP2; this interaction may mediate VEGFR2 cell surface expression. Requires Mg(2+) as cofactor. Post-translationally, phosphorylated by CDK1 kinase during mitosis. Serotonylation of Gln-72 by TGM2 during activation and aggregation of platelets leads to constitutive activation of GTPase activity.

The protein resides in the membrane. Its subcellular location is the cytoplasm. It is found in the early endosome membrane. The protein localises to the recycling endosome membrane. It carries out the reaction GTP + H2O = GDP + phosphate + H(+). Regulated by guanine nucleotide exchange factors (GEFs) which promote the exchange of bound GDP for free GTP. Regulated by GTPase activating proteins (GAPs) which increase the GTP hydrolysis activity. Inhibited by GDP dissociation inhibitors (GDIs). In terms of biological role, the small GTPases Rab are key regulators of intracellular membrane trafficking, from the formation of transport vesicles to their fusion with membranes. Rabs cycle between an inactive GDP-bound form and an active GTP-bound form that is able to recruit to membranes different sets of downstream effectors directly responsible for vesicle formation, movement, tethering and fusion. RAB4A is involved in protein transport. Also plays a role in vesicular traffic. Mediates VEGFR2 endosomal trafficking to enhance VEGFR2 signaling. Acts as a regulator of platelet alpha-granule release during activation and aggregation of platelets. The sequence is that of Ras-related protein Rab-4A from Homo sapiens (Human).